Consider the following 118-residue polypeptide: Non-specific lipid-transfer protein 2 (118 aa).

The N-terminal stretch at 1–25 is a signal peptide; the sequence is MARGMKLACVVLVICMVVIAPMAEG. 4 disulfides stabilise this stretch: Cys29/Cys76, Cys39/Cys53, Cys54/Cys99, and Cys74/Cys113.

It belongs to the plant LTP family.

Its function is as follows. Plant non-specific lipid-transfer proteins transfer phospholipids as well as galactolipids across membranes. May play a role in wax or cutin deposition in the cell walls of expanding epidermal cells and certain secretory tissues. Binds saturated fatty acids, jasmonic acid and, with highest efficiency, unsaturated fatty acids and lysolipids. The chain is Non-specific lipid-transfer protein 2 from Lens culinaris (Lentil).